We begin with the raw amino-acid sequence, 337 residues long: ERI1 exoribonuclease 3 (337 aa).

In terms of domain architecture, Exonuclease spans 146 to 320 (FLVLDFEATC…DDCKNIANIM (175 aa)). Residues D150, E152, and D249 each contribute to the Mg(2+) site. Catalysis depends on E152, which acts as the Proton acceptor. Residue E152 participates in AMP binding. The active-site Proton acceptor is H307. An AMP-binding site is contributed by H307. D312 is a binding site for Mg(2+).

In terms of assembly, interacts with PRNP. Mg(2+) is required as a cofactor. As to expression, highly expressed in the brain, heart, thyroid and testis. Expressed at low levels in the muscle cells, liver, pancreas and kidney.

This is ERI1 exoribonuclease 3 (Eri3) from Mus musculus (Mouse).